Reading from the N-terminus, the 315-residue chain is Ribose-phosphate pyrophosphokinase (315 aa).

ATP-binding positions include 37–39 (DGE) and 96–97 (RQ). H131 and D171 together coordinate Mg(2+). Residue K195 is part of the active site. D-ribose 5-phosphate contacts are provided by residues R197, D221, and 225 to 229 (DTGGT).

This sequence belongs to the ribose-phosphate pyrophosphokinase family. Class I subfamily. Homohexamer. It depends on Mg(2+) as a cofactor.

Its subcellular location is the cytoplasm. The enzyme catalyses D-ribose 5-phosphate + ATP = 5-phospho-alpha-D-ribose 1-diphosphate + AMP + H(+). The protein operates within metabolic intermediate biosynthesis; 5-phospho-alpha-D-ribose 1-diphosphate biosynthesis; 5-phospho-alpha-D-ribose 1-diphosphate from D-ribose 5-phosphate (route I): step 1/1. In terms of biological role, involved in the biosynthesis of the central metabolite phospho-alpha-D-ribosyl-1-pyrophosphate (PRPP) via the transfer of pyrophosphoryl group from ATP to 1-hydroxyl of ribose-5-phosphate (Rib-5-P). The protein is Ribose-phosphate pyrophosphokinase of Haemophilus influenzae (strain ATCC 51907 / DSM 11121 / KW20 / Rd).